We begin with the raw amino-acid sequence, 632 residues long: Putative ankyrin repeat protein L767 (632 aa).

ANK repeat units lie at residues 61–97 (YGNTFMTNRIIKNTKYSLLDVNTVQMLLDYGDPDYEF), 228–250 (FDNEKLFYTVLYDSFELTKYIVE), 251–282 (KGFYYDFDSVINSDINLEMLKFFIELGNNLTD), 345–374 (NLDILMKTSILRENINMIKKCIEYGINVDD), and 517–546 (NSIELLFVVVLSENIDLFKLLLEINCNDTD).

In Acanthamoeba polyphaga mimivirus (APMV), this protein is Putative ankyrin repeat protein L767.